Here is a 637-residue protein sequence, read N- to C-terminus: Phospholipase B (637 aa).

The first 19 residues, 1–19 (MSIATATFAFSLFATIAFA), serve as a signal peptide directing secretion. The 527-residue stretch at 46–572 (DCPSNVTWIR…DTWCWAGDDN (527 aa)) folds into the PLA2c domain. Residues Asn-50, Asn-56, Asn-122, Asn-231, Asn-246, Asn-272, Asn-314, Asn-343, Asn-387, Asn-433, Asn-481, Asn-501, Asn-528, Asn-553, Asn-572, Asn-594, and Asn-606 are each glycosylated (N-linked (GlcNAc...) asparagine).

It belongs to the lysophospholipase family. Post-translationally, N-glycosylated.

It localises to the secreted. It is found in the cell membrane. It catalyses the reaction a 1-acyl-sn-glycero-3-phosphocholine + H2O = sn-glycerol 3-phosphocholine + a fatty acid + H(+). Its activity is regulated as follows. Inhibited by Fe(3+) ion. Functionally, exhibits phospholipase B (PLB), lysophospholipase (LPL) and lysophospholipase/transacylase (LPTA) activities. The chain is Phospholipase B (PLB1) from Cryptococcus neoformans var. grubii serotype A (strain H99 / ATCC 208821 / CBS 10515 / FGSC 9487) (Filobasidiella neoformans var. grubii).